The sequence spans 230 residues: Triosephosphate isomerase (230 aa).

9–11 lines the substrate pocket; it reads NYK. Catalysis depends on His93, which acts as the Electrophile. Glu141 (proton acceptor) is an active-site residue. Substrate is bound by residues Ile146, Gly180, and 201–202; that span reads AS.

Belongs to the triosephosphate isomerase family. In terms of assembly, homotetramer; dimer of dimers.

It is found in the cytoplasm. The catalysed reaction is D-glyceraldehyde 3-phosphate = dihydroxyacetone phosphate. It participates in carbohydrate biosynthesis; gluconeogenesis. It functions in the pathway carbohydrate degradation; glycolysis; D-glyceraldehyde 3-phosphate from glycerone phosphate: step 1/1. In terms of biological role, involved in the gluconeogenesis. Catalyzes stereospecifically the conversion of dihydroxyacetone phosphate (DHAP) to D-glyceraldehyde-3-phosphate (G3P). This chain is Triosephosphate isomerase, found in Sulfolobus acidocaldarius (strain ATCC 33909 / DSM 639 / JCM 8929 / NBRC 15157 / NCIMB 11770).